Consider the following 163-residue polypeptide: Crossover junction endodeoxyribonuclease RuvC (163 aa).

Active-site residues include Asp9, Glu76, and Asp148. Mg(2+) contacts are provided by Asp9, Glu76, and Asp148.

It belongs to the RuvC family. In terms of assembly, homodimer which binds Holliday junction (HJ) DNA. The HJ becomes 2-fold symmetrical on binding to RuvC with unstacked arms; it has a different conformation from HJ DNA in complex with RuvA. In the full resolvosome a probable DNA-RuvA(4)-RuvB(12)-RuvC(2) complex forms which resolves the HJ. Requires Mg(2+) as cofactor.

It is found in the cytoplasm. It catalyses the reaction Endonucleolytic cleavage at a junction such as a reciprocal single-stranded crossover between two homologous DNA duplexes (Holliday junction).. The RuvA-RuvB-RuvC complex processes Holliday junction (HJ) DNA during genetic recombination and DNA repair. Endonuclease that resolves HJ intermediates. Cleaves cruciform DNA by making single-stranded nicks across the HJ at symmetrical positions within the homologous arms, yielding a 5'-phosphate and a 3'-hydroxyl group; requires a central core of homology in the junction. The consensus cleavage sequence is 5'-(A/T)TT(C/G)-3'. Cleavage occurs on the 3'-side of the TT dinucleotide at the point of strand exchange. HJ branch migration catalyzed by RuvA-RuvB allows RuvC to scan DNA until it finds its consensus sequence, where it cleaves and resolves the cruciform DNA. This chain is Crossover junction endodeoxyribonuclease RuvC, found in Trichormus variabilis (strain ATCC 29413 / PCC 7937) (Anabaena variabilis).